Here is a 108-residue protein sequence, read N- to C-terminus: uncharacterized protein (108 aa).

The next 3 helical transmembrane spans lie at 10–32 (SLCYFSVFIAPIIVPIVAYFVVN), 45–67 (ISHIVPFVGWLFLFIALLGGAVA), and 77–99 (FVIIGGAVIYFLVVIGIIIWNVI).

It is found in the cell membrane. This is an uncharacterized protein from Bacillus subtilis (strain 168).